Consider the following 319-residue polypeptide: Phosphoribosylformylglycinamidine cyclo-ligase (319 aa).

It belongs to the AIR synthase family.

Its subcellular location is the cytoplasm. It carries out the reaction 2-formamido-N(1)-(5-O-phospho-beta-D-ribosyl)acetamidine + ATP = 5-amino-1-(5-phospho-beta-D-ribosyl)imidazole + ADP + phosphate + H(+). It functions in the pathway purine metabolism; IMP biosynthesis via de novo pathway; 5-amino-1-(5-phospho-D-ribosyl)imidazole from N(2)-formyl-N(1)-(5-phospho-D-ribosyl)glycinamide: step 2/2. The protein is Phosphoribosylformylglycinamidine cyclo-ligase of Sulfurisphaera tokodaii (strain DSM 16993 / JCM 10545 / NBRC 100140 / 7) (Sulfolobus tokodaii).